The sequence spans 345 residues: MTDKTSLSYKDAGVDIDAGNALVGRIKGVVKKTRRPEVMGGLGGFGALCALPQKYREPVLVSGTDGVGTKLRLSMDLKRHDTIGIDLVAMCVNDLVVQGAEPLFFLDYYATGKLDVDTASAVISGIAEGCLQSGCSLVGGETAEMPGMYHGEDYDVAGFCVGVVEKSEIIDGSKVSDGDVLIALGSSGPHSNGYSLVRKILEVSGCDPQTTELDGKPLADHLLAPTRIYVKSVLELIEKVDVHAIAHLTGGGFWENIPRVLPDNTQAVIDESSWQWPEVFNWLQTAGNVERHEMYRTFNCGVGMIIALPAPEVDKALALLNANGENAWKIGIIKASDSEQRVVIE.

It belongs to the AIR synthase family.

It is found in the cytoplasm. It carries out the reaction 2-formamido-N(1)-(5-O-phospho-beta-D-ribosyl)acetamidine + ATP = 5-amino-1-(5-phospho-beta-D-ribosyl)imidazole + ADP + phosphate + H(+). It participates in purine metabolism; IMP biosynthesis via de novo pathway; 5-amino-1-(5-phospho-D-ribosyl)imidazole from N(2)-formyl-N(1)-(5-phospho-D-ribosyl)glycinamide: step 2/2. The sequence is that of Phosphoribosylformylglycinamidine cyclo-ligase from Escherichia coli O7:K1 (strain IAI39 / ExPEC).